Consider the following 76-residue polypeptide: Alpha/kappa-conotoxin-like fe14.2 (76 aa).

Positions 1-24 (MPSVRSVTCCCLLWMMLSVQLVTP) are cleaved as a signal peptide. A propeptide spanning residues 25-39 (GSPGTAQLSGQRTAR) is cleaved from the precursor. Intrachain disulfides connect cysteine 46/cysteine 61 and cysteine 50/cysteine 63. Residue arginine 64 is modified to Arginine amide. Residues 65–76 (GKRDVVSSSMAV) constitute a propeptide that is removed on maturation.

Belongs to the conotoxin J superfamily. As to expression, expressed by the venom duct.

It is found in the secreted. Highly inhibits both nicotinic acetylcholine receptors (neuronal (alpha-3/beta-4) and muscular (alpha-1/beta-1/epsilon/delta) subtypes) and the voltage-gated potassium channel Kv1.6/KCNA6 subtype. The chain is Alpha/kappa-conotoxin-like fe14.2 from Conus ferrugineus (Cone snail).